Here is a 63-residue protein sequence, read N- to C-terminus: Large ribosomal subunit protein bL35 (63 aa).

This sequence belongs to the bacterial ribosomal protein bL35 family.

This chain is Large ribosomal subunit protein bL35, found in Campylobacter concisus (strain 13826).